We begin with the raw amino-acid sequence, 115 residues long: DNA-binding protein APE_1087b (115 aa).

This sequence belongs to the PDCD5 family.

The sequence is that of DNA-binding protein APE_1087b from Aeropyrum pernix (strain ATCC 700893 / DSM 11879 / JCM 9820 / NBRC 100138 / K1).